Here is a 181-residue protein sequence, read N- to C-terminus: Methanesulfonate monooxygenase hydroxylase subunit beta (181 aa).

This sequence belongs to the bacterial ring-hydroxylating dioxygenase beta subunit family. The MSA monooxygenase system consists of 4 proteins: the 2 subunits of the hydroxylase component (MsmA and MsmB), a ferredoxin (MsmC) and a ferredoxin reductase (MsmD). The hydroxylase component consists of a 3 alpha (MsmA) and 3 beta (MsmB) subunits.

The protein localises to the cytoplasm. It catalyses the reaction methanesulfonate + NADH + O2 = sulfite + formaldehyde + NAD(+) + H2O. MSAMO is inhibited by metal chelators (such as bathophenanthroline, bathocuprione, neocuprione, alpha-alpha-dipyridil and sodium EDTA) and by sodium azide, sodium arsenate and potassium cyanide. Methanesulfonate monooxygenase (MSAMO) mediates the primary degradation of methanesulfonic acid (MSA) to produce formaldehyd and inorganic sulfite by initial hydroxylation of the carbon atom prior to spontaneous cleavage of the unstable hydroxymethanesulfonic acid. MSAMO has a restricted substrate range that includes only the short-chain aliphatic sulfonates (methane- to butanesulfonate) and excludes all larger molecules, such as arylsulfonates and aromatic sulfonates. All MSAMO components are required for enzyme activity. This Methylosulfonomonas methylovora protein is Methanesulfonate monooxygenase hydroxylase subunit beta.